Here is a 1057-residue protein sequence, read N- to C-terminus: Probable E3 ubiquitin-protein ligase HERC4 (1057 aa).

RCC1 repeat units lie at residues 1–51 (MLCW…FVLD), 52–101 (DGTV…ALND), 102–154 (KGQV…ALSK), 156–207 (SEVF…VLTL), 208–259 (SGAI…ALTK), 261–311 (GGVF…AFVP), and 313–366 (SGRI…CVKR). The HECT domain maps to 730 to 1057 (KNIDYKKPLK…IDHNEGFSLI (328 aa)). The active-site Glycyl thioester intermediate is the C1025.

Ubiquitously expressed, highest expression is found in testis during spermiogenesis. It is specifically found in spermatogonia, spermatocytes, and spermatids with little or no expression detectable in the spermatozoa, or interstitial cells.

The protein localises to the cytoplasm. It is found in the cytosol. It catalyses the reaction S-ubiquitinyl-[E2 ubiquitin-conjugating enzyme]-L-cysteine + [acceptor protein]-L-lysine = [E2 ubiquitin-conjugating enzyme]-L-cysteine + N(6)-ubiquitinyl-[acceptor protein]-L-lysine.. The protein operates within protein modification; protein ubiquitination. In terms of biological role, probable E3 ubiquitin-protein ligase involved in either protein trafficking or in the distribution of cellular structures. Required for spermatozoon maturation and fertility, and for the removal of the cytoplasmic droplet of the spermatozoon. E3 ubiquitin-protein ligases accept ubiquitin from an E2 ubiquitin-conjugating enzyme in the form of a thioester and then directly transfer it to targeted substrates. The sequence is that of Probable E3 ubiquitin-protein ligase HERC4 (Herc4) from Mus musculus (Mouse).